The sequence spans 64 residues: Translational regulator CsrA (64 aa).

It belongs to the CsrA/RsmA family. In terms of assembly, homodimer; the beta-strands of each monomer intercalate to form a hydrophobic core, while the alpha-helices form wings that extend away from the core.

The protein resides in the cytoplasm. In terms of biological role, a key translational regulator that binds mRNA to regulate translation initiation and/or mRNA stability. Mediates global changes in gene expression, shifting from rapid growth to stress survival by linking envelope stress, the stringent response and the catabolite repression systems. Usually binds in the 5'-UTR; binding at or near the Shine-Dalgarno sequence prevents ribosome-binding, repressing translation, binding elsewhere in the 5'-UTR can activate translation and/or stabilize the mRNA. Its function is antagonized by small RNA(s). This Thioalkalivibrio sulfidiphilus (strain HL-EbGR7) protein is Translational regulator CsrA.